We begin with the raw amino-acid sequence, 186 residues long: Small ribosomal subunit protein eS7 (186 aa).

This sequence belongs to the eukaryotic ribosomal protein eS7 family. In terms of assembly, component of the small ribosomal subunit. Mature ribosomes consist of a small (40S) and a large (60S) subunit. The 40S subunit contains about 32 different proteins and 1 molecule of RNA (18S). The 60S subunit contains 45 different proteins and 3 molecules of RNA (25S, 5.8S and 5S).

It localises to the cytoplasm. Its function is as follows. Component of the ribosome, a large ribonucleoprotein complex responsible for the synthesis of proteins in the cell. The small ribosomal subunit (SSU) binds messenger RNAs (mRNAs) and translates the encoded message by selecting cognate aminoacyl-transfer RNA (tRNA) molecules. The large subunit (LSU) contains the ribosomal catalytic site termed the peptidyl transferase center (PTC), which catalyzes the formation of peptide bonds, thereby polymerizing the amino acids delivered by tRNAs into a polypeptide chain. The nascent polypeptides leave the ribosome through a tunnel in the LSU and interact with protein factors that function in enzymatic processing, targeting, and the membrane insertion of nascent chains at the exit of the ribosomal tunnel. RPS7A is involved in nucleolar processing of pre-18S ribosomal RNA and ribosome assembly. The chain is Small ribosomal subunit protein eS7 (RPS7A) from Candida albicans (strain SC5314 / ATCC MYA-2876) (Yeast).